Consider the following 244-residue polypeptide: 5-oxoprolinase subunit A (244 aa).

This sequence belongs to the LamB/PxpA family. In terms of assembly, forms a complex composed of PxpA, PxpB and PxpC.

The catalysed reaction is 5-oxo-L-proline + ATP + 2 H2O = L-glutamate + ADP + phosphate + H(+). Catalyzes the cleavage of 5-oxoproline to form L-glutamate coupled to the hydrolysis of ATP to ADP and inorganic phosphate. This chain is 5-oxoprolinase subunit A, found in Salmonella arizonae (strain ATCC BAA-731 / CDC346-86 / RSK2980).